Consider the following 218-residue polypeptide: GTP cyclohydrolase 1 (218 aa).

Zn(2+)-binding residues include Cys109, His112, and Cys180.

Belongs to the GTP cyclohydrolase I family. As to quaternary structure, toroid-shaped homodecamer, composed of two pentamers of five dimers.

It catalyses the reaction GTP + H2O = 7,8-dihydroneopterin 3'-triphosphate + formate + H(+). It participates in cofactor biosynthesis; 7,8-dihydroneopterin triphosphate biosynthesis; 7,8-dihydroneopterin triphosphate from GTP: step 1/1. The chain is GTP cyclohydrolase 1 from Actinobacillus pleuropneumoniae serotype 5b (strain L20).